We begin with the raw amino-acid sequence, 389 residues long: Inner membrane transport protein YdhP (389 aa).

Topologically, residues 1–6 (MKINYP) are cytoplasmic. Residues 7 to 27 (LLALAIGAFGIGTTEFSPMGL) form a helical membrane-spanning segment. At 28–43 (LPVIARGVDVSIPAAG) the chain is on the periplasmic side. The helical transmembrane segment at 44–64 (MLISAYAVGVMVGAPLMTLLL) threads the bilayer. At 65-70 (SHRARR) the chain is on the cytoplasmic side. Residues 71-91 (SALIFLMAIFTLGNVLSAIAP) form a helical membrane-spanning segment. Residues 92 to 100 (DYMTLMLSR) lie on the Periplasmic side of the membrane. The chain crosses the membrane as a helical span at residues 101 to 121 (ILTSLNHGAFFGLGSVVAASV). Residues 122 to 130 (VPKHKQASA) are Cytoplasmic-facing. The chain crosses the membrane as a helical span at residues 131-151 (VATMFMGLTLANIGGVPAATW). Topologically, residues 152-159 (LGETIGWR) are periplasmic. A helical transmembrane segment spans residues 160-180 (MSFLATAGLGVISMVSLFFSL). Residues 181–203 (PKGGAGARPEVKKELAVLMRPQV) lie on the Cytoplasmic side of the membrane. Residues 204–224 (LSALLTTVLGAGAMFTLYTYI) form a helical membrane-spanning segment. The Periplasmic portion of the chain corresponds to 225–236 (SPVLQSITHATP). The helical transmembrane segment at 237 to 257 (VFVTAMLVLIGVGFSIGNYLG) threads the bilayer. The Cytoplasmic portion of the chain corresponds to 258 to 266 (GKLADRSVN). The chain crosses the membrane as a helical span at residues 267–287 (GTLKGFLLLLMVIMLAIPFLA). Over 288-290 (RNK) the chain is Periplasmic. Residues 291-311 (FGAAISMAVWGAATFAVVPPL) traverse the membrane as a helical segment. At 312 to 330 (QMRVMRVASEAPGLSSSVN) the chain is on the cytoplasmic side. Residues 331–351 (IGAFNLGNALGAAAGGAVISA) traverse the membrane as a helical segment. Topologically, residues 352-356 (GLGYS) are periplasmic. A helical membrane pass occupies residues 357-377 (FVPVMGAIVAGLALLLVFMSA). Residues 378–389 (RKQPETVCVANS) are Cytoplasmic-facing.

Belongs to the major facilitator superfamily.

The protein localises to the cell inner membrane. This is Inner membrane transport protein YdhP (ydhP) from Escherichia coli O157:H7.